The primary structure comprises 264 residues: DNA-binding HTH-type transcriptional repressor TrmBL2 (264 aa).

Residues 81-113 (LEKFIEEWQERVKEELEAKKKAKEELIELMKPL) adopt a coiled-coil conformation.

This sequence belongs to the transcriptional regulator TrmB family.

It localises to the cytoplasm. It is found in the chromosome. Its function is as follows. An abundant chromosomal protein that seems to be involved in both genome architecture and transcription repression. Incubation with DNA in vitro gives fibrous structures 14.2 +/- 2.1 nm in thickness (naked DNA is 1.83 +/- 0.37 nm); does not significantly compact DNA. Binds to both coding and non-coding regions; binding within gene promoters correlates with decreased transcript levels, while binding within coding regions does not. This is DNA-binding HTH-type transcriptional repressor TrmBL2 from Thermococcus kodakarensis (strain ATCC BAA-918 / JCM 12380 / KOD1) (Pyrococcus kodakaraensis (strain KOD1)).